A 139-amino-acid chain; its full sequence is Putative pre-16S rRNA nuclease (139 aa).

It belongs to the YqgF nuclease family.

It is found in the cytoplasm. Functionally, could be a nuclease involved in processing of the 5'-end of pre-16S rRNA. This is Putative pre-16S rRNA nuclease from Legionella pneumophila (strain Lens).